The sequence spans 243 residues: Adenosylcobinamide-GDP ribazoletransferase (243 aa).

5 helical membrane passes run Leu-31–Leu-51, Ala-55–Leu-75, Ile-109–Ile-129, Ile-135–Thr-155, and Val-188–Trp-208.

This sequence belongs to the CobS family. It depends on Mg(2+) as a cofactor.

It localises to the cell inner membrane. The catalysed reaction is alpha-ribazole + adenosylcob(III)inamide-GDP = adenosylcob(III)alamin + GMP + H(+). The enzyme catalyses alpha-ribazole 5'-phosphate + adenosylcob(III)inamide-GDP = adenosylcob(III)alamin 5'-phosphate + GMP + H(+). It participates in cofactor biosynthesis; adenosylcobalamin biosynthesis; adenosylcobalamin from cob(II)yrinate a,c-diamide: step 7/7. Functionally, joins adenosylcobinamide-GDP and alpha-ribazole to generate adenosylcobalamin (Ado-cobalamin). Also synthesizes adenosylcobalamin 5'-phosphate from adenosylcobinamide-GDP and alpha-ribazole 5'-phosphate. This Pseudomonas syringae pv. tomato (strain ATCC BAA-871 / DC3000) protein is Adenosylcobinamide-GDP ribazoletransferase.